A 360-amino-acid polypeptide reads, in one-letter code: Phospho-N-acetylmuramoyl-pentapeptide-transferase (360 aa).

Helical transmembrane passes span 26 to 46, 74 to 94, 97 to 117, 134 to 154, 168 to 188, 199 to 219, 236 to 256, 263 to 283, 288 to 308, and 338 to 358; these read AILG…KLIE, MGGL…GDLG, YVWV…IDDY, YILQ…TAAN, VMPQ…VGSS, GLAI…AYLS, SGEL…FLWF, VFMG…IAVL, ILLV…ILQV, and VIVR…ATLK.

It belongs to the glycosyltransferase 4 family. MraY subfamily. It depends on Mg(2+) as a cofactor.

It localises to the cell inner membrane. The enzyme catalyses UDP-N-acetyl-alpha-D-muramoyl-L-alanyl-gamma-D-glutamyl-meso-2,6-diaminopimeloyl-D-alanyl-D-alanine + di-trans,octa-cis-undecaprenyl phosphate = di-trans,octa-cis-undecaprenyl diphospho-N-acetyl-alpha-D-muramoyl-L-alanyl-D-glutamyl-meso-2,6-diaminopimeloyl-D-alanyl-D-alanine + UMP. It participates in cell wall biogenesis; peptidoglycan biosynthesis. Functionally, catalyzes the initial step of the lipid cycle reactions in the biosynthesis of the cell wall peptidoglycan: transfers peptidoglycan precursor phospho-MurNAc-pentapeptide from UDP-MurNAc-pentapeptide onto the lipid carrier undecaprenyl phosphate, yielding undecaprenyl-pyrophosphoryl-MurNAc-pentapeptide, known as lipid I. In Shewanella putrefaciens (strain CN-32 / ATCC BAA-453), this protein is Phospho-N-acetylmuramoyl-pentapeptide-transferase.